The following is a 269-amino-acid chain: 4-hydroxy-tetrahydrodipicolinate reductase (269 aa).

NAD(+) is bound by residues 8–13 (GAAGRM) and glutamate 34. Arginine 35 is an NADP(+) binding site. Residues 98–100 (GTT) and 122–125 (APNY) each bind NAD(+). Histidine 155 functions as the Proton donor/acceptor in the catalytic mechanism. Histidine 156 is a binding site for (S)-2,3,4,5-tetrahydrodipicolinate. Lysine 159 (proton donor) is an active-site residue. Position 165–166 (165–166 (GT)) interacts with (S)-2,3,4,5-tetrahydrodipicolinate.

The protein belongs to the DapB family.

The protein resides in the cytoplasm. The enzyme catalyses (S)-2,3,4,5-tetrahydrodipicolinate + NAD(+) + H2O = (2S,4S)-4-hydroxy-2,3,4,5-tetrahydrodipicolinate + NADH + H(+). It catalyses the reaction (S)-2,3,4,5-tetrahydrodipicolinate + NADP(+) + H2O = (2S,4S)-4-hydroxy-2,3,4,5-tetrahydrodipicolinate + NADPH + H(+). Its pathway is amino-acid biosynthesis; L-lysine biosynthesis via DAP pathway; (S)-tetrahydrodipicolinate from L-aspartate: step 4/4. In terms of biological role, catalyzes the conversion of 4-hydroxy-tetrahydrodipicolinate (HTPA) to tetrahydrodipicolinate. This Vibrio cholerae serotype O1 (strain ATCC 39315 / El Tor Inaba N16961) protein is 4-hydroxy-tetrahydrodipicolinate reductase.